The primary structure comprises 566 residues: Cytoplasmic polyadenylation element-binding protein 2 (566 aa).

Disordered stretches follow at residues 17 to 46 (FWGN…SVEG) and 64 to 98 (LERL…IQEQ). Positions 87–98 (DSEEEEEDIQEQ) are enriched in acidic residues. In terms of domain architecture, RRM spans 430 to 512 (MVAFIGGVPR…KRVEIKPYFF (83 aa)).

Cytoplasmic polyadenylation element binding protein that binds to and regulates the translation of specific mRNAs. The protein is Cytoplasmic polyadenylation element-binding protein 2 (cpb-2) of Caenorhabditis briggsae.